The chain runs to 1260 residues: Phosphatidylinositol 3,4,5-trisphosphate 5-phosphatase 2 (1260 aa).

The region spanning 25-121 is the SH2 domain; it reads WYHRDLSRAA…GLVCALLLPV (97 aa). The span at 126 to 136 shows a compositional bias: basic and acidic residues; that stretch reads ELDPPDERDAS. Residues 126–178 form a disordered region; that stretch reads ELDPPDERDASDGEDEKPPLPPRSGTSVSAPLGPSSPPAAPEPPTPAVESAPN. Ser136 bears the Phosphoserine mark. The span at 159–171 shows a compositional bias: pro residues; that stretch reads PSSPPAAPEPPTP. Ser243 and Ser355 each carry phosphoserine. Position 888 is a phosphotyrosine (Tyr888). Phosphoserine is present on Ser892. Positions 899 to 1120 are disordered; the sequence is GAKSKAPSVS…FLGEAAGGDD (222 aa). Pro residues predominate over residues 940-952; sequence PPPTGRPPAPPRA. Positions 946 to 951 match the SH3-binding motif; that stretch reads PPAPPR. Positions 953-967 are enriched in basic and acidic residues; the sequence is APREEPLTPRLKPEG. Position 960 is a phosphothreonine (Thr960). The short motif at 985–988 is the NPXY motif element; sequence NPAY. Position 988 is a phosphotyrosine (Tyr988). Composition is skewed to pro residues over residues 998–1013, 1050–1061, and 1090–1108; these read LLPPEPPSPARAPVPP, LPPPDFPPPPLP, and LPPPKAHPRPPLPPGPLPP. Ser1133 is subject to Phosphoserine. Tyr1164 carries the post-translational modification Phosphotyrosine. The interval 1181–1200 is disordered; the sequence is EDLAEEAPCPQAGRTGGLGE. Residues 1198-1260 form the SAM domain; that stretch reads LGEAGMGAWL…LLLDTLQLSK (63 aa). At Ser1259 the chain carries Phosphoserine.

It belongs to the inositol 1,4,5-trisphosphate 5-phosphatase family. As to quaternary structure, interacts with tyrosine phosphorylated form of SHC1. Interacts with EGFR. Upon stimulation by the EGF signaling pathway, it forms a complex with SHC1 and EGFR. Interacts with cytoskeletal protein SORBS3/vinexin, promoting its localization to the periphery of cells. Forms a complex with filamin (FLNA or FLNB), actin, GPIb (GP1BA or GP1BB) that regulates cortical and submembraneous actin. Interacts with c-Met/MET, when c-Met/MET is phosphorylated on 'Tyr-1356'. Interacts with p130Cas/BCAR1. Interacts with CENTD3/ARAP3 via its SAM domain. Interacts with c-Cbl/CBL and CAP/SORBS1. Interacts with activated EPHA2 receptor. Interacts with receptor FCGR2A. Interacts with receptor FCGR2B. Interacts with tyrosine kinase ABL1. Interacts with tyrosine kinase TEC. Interacts with CSF1R. Interacts (via N-terminus) with SH3YL1 (via SH3 domain). Interacts with FCRL6 (tyrosine phosphorylated form). Interacts (via SH2 domain) with tyrosine phosphorylated KLRC1 (via ITIM). Interacts with NEDD9/HEF1. Tyrosine phosphorylated by the members of the SRC family after exposure to a diverse array of extracellular stimuli such as insulin, growth factors such as EGF or PDGF, chemokines, integrin ligands and hypertonic and oxidative stress. May be phosphorylated upon IgG receptor FCGR2B-binding. Phosphorylated at Tyr-988 following cell attachment and spreading. Phosphorylated at Tyr-1164 following EGF signaling pathway stimulation. Expressed abundantly in skeletal muscle tissue.

Its subcellular location is the cytoplasm. It localises to the cytosol. The protein localises to the cytoskeleton. It is found in the membrane. The protein resides in the cell projection. Its subcellular location is the filopodium. It localises to the lamellipodium. The protein localises to the basal cell membrane. It is found in the nucleus. The protein resides in the nucleus speckle. Its subcellular location is the spindle pole. It catalyses the reaction a 1,2-diacyl-sn-glycero-3-phospho-(1D-myo-inositol-3,4,5-trisphosphate) + H2O = a 1,2-diacyl-sn-glycero-3-phospho-(1D-myo-inositol-3,4-bisphosphate) + phosphate. It carries out the reaction 1,2-dioctanoyl-sn-glycero-3-phospho-(1D-myo-inositol-3,4,5-trisphosphate) + H2O = 1,2-dioctanoyl-sn-glycero-3-phospho-(1D-myo-inositol-3,4-bisphosphate) + phosphate. The catalysed reaction is 1,2-dihexadecanoyl-sn-glycero-3-phospho-(1D-myo-inositol-3,4,5-trisphosphate) + H2O = 1,2-dihexadecanoyl-sn-glycero-3-phospho-(1D-myo-inositol-3,4-bisphosphate) + phosphate. Its activity is regulated as follows. Activated upon translocation to the sites of synthesis of PtdIns(3,4,5)P3 in the membrane. Enzymatic activity is enhanced in the presence of phosphatidylserine. Functionally, phosphatidylinositol (PtdIns) phosphatase that specifically hydrolyzes the 5-phosphate of phosphatidylinositol-3,4,5-trisphosphate (PtdIns(3,4,5)P3) to produce PtdIns(3,4)P2, thereby negatively regulating the PI3K (phosphoinositide 3-kinase) pathways. Required for correct mitotic spindle orientation and therefore progression of mitosis. Plays a central role in regulation of PI3K-dependent insulin signaling, although the precise molecular mechanisms and signaling pathways remain unclear. While overexpression reduces both insulin-stimulated MAP kinase and Akt activation, its absence does not affect insulin signaling or GLUT4 trafficking. Confers resistance to dietary obesity. May act by regulating AKT2, but not AKT1, phosphorylation at the plasma membrane. Part of a signaling pathway that regulates actin cytoskeleton remodeling. Required for the maintenance and dynamic remodeling of actin structures as well as in endocytosis, having a major impact on ligand-induced EGFR internalization and degradation. Participates in regulation of cortical and submembraneous actin by hydrolyzing PtdIns(3,4,5)P3 thereby regulating membrane ruffling. Regulates cell adhesion and cell spreading. Required for HGF-mediated lamellipodium formation, cell scattering and spreading. Acts as a negative regulator of EPHA2 receptor endocytosis by inhibiting via PI3K-dependent Rac1 activation. Acts as a regulator of neuritogenesis by regulating PtdIns(3,4,5)P3 level and is required to form an initial protrusive pattern, and later, maintain proper neurite outgrowth. Acts as a negative regulator of the FC-gamma-RIIA receptor (FCGR2A). Mediates signaling from the FC-gamma-RIIB receptor (FCGR2B), playing a central role in terminating signal transduction from activating immune/hematopoietic cell receptor systems. Involved in EGF signaling pathway. Upon stimulation by EGF, it is recruited by EGFR and dephosphorylates PtdIns(3,4,5)P3. Plays a negative role in regulating the PI3K-PKB pathway, possibly by inhibiting PKB activity. Down-regulates Fc-gamma-R-mediated phagocytosis in macrophages independently of INPP5D/SHIP1. In macrophages, down-regulates NF-kappa-B-dependent gene transcription by regulating macrophage colony-stimulating factor (M-CSF)-induced signaling. Plays a role in the localization of AURKA and NEDD9/HEF1 to the basolateral membrane at interphase in polarized cysts, thereby mediates cell cycle homeostasis, cell polarization and cilia assembly. Additionally promotion of cilia growth is also facilitated by hydrolysis of (PtdIns(3,4,5)P3) to PtdIns(3,4)P2. Promotes formation of apical membrane-initiation sites during the initial stages of lumen formation via Rho family-induced actin filament organization and CTNNB1 localization to cell-cell contacts. May also hydrolyze PtdIns(1,3,4,5)P4, and could thus affect the levels of the higher inositol polyphosphates like InsP6. Involved in endochondral ossification. This Sus scrofa (Pig) protein is Phosphatidylinositol 3,4,5-trisphosphate 5-phosphatase 2.